A 663-amino-acid polypeptide reads, in one-letter code: General transcription and DNA repair factor IIH subunit tcf-29 (663 aa).

BSD domains are found at residues 147–206 and 227–278; these read WFED…RAYA and ENGE…LSKK. Disordered stretches follow at residues 452–491 and 513–535; these read DSDG…QHVG and HLTT…EERP. Residues 453–465 are compositionally biased toward basic and acidic residues; that stretch reads SDGRGGIDLHRSI. The span at 515-528 shows a compositional bias: low complexity; the sequence is TTTTTHGGSHTTTT.

Belongs to the TFB1 family. In terms of assembly, component of the 7-subunit TFIIH core complex composed of XPB/rad25, XPD/dnr-10, tcf-30/SSL1, tcf-29/TFB1, tcf-11/TFB2, tcf-14/TFB4 and rtf-1/TFB5, which is active in NER. The core complex associates with the 3-subunit CTD-kinase module TFIIK composed of div-66/cyclin H, prk-3/KIN28 and rtf-2/TFB3 to form the 10-subunit holoenzyme (holo-TFIIH) active in transcription.

Its subcellular location is the nucleus. Functionally, component of the general transcription and DNA repair factor IIH (TFIIH) core complex, which is involved in general and transcription-coupled nucleotide excision repair (NER) of damaged DNA and, when complexed to TFIIK, in RNA transcription by RNA polymerase II. In NER, TFIIH acts by opening DNA around the lesion to allow the excision of the damaged oligonucleotide and its replacement by a new DNA fragment. In transcription, TFIIH has an essential role in transcription initiation. When the pre-initiation complex (PIC) has been established, TFIIH is required for promoter opening and promoter escape. Phosphorylation of the C-terminal tail (CTD) of the largest subunit of RNA polymerase II by the kinase module TFIIK controls the initiation of transcription. This is General transcription and DNA repair factor IIH subunit tcf-29 (tcf-29) from Neurospora crassa (strain ATCC 24698 / 74-OR23-1A / CBS 708.71 / DSM 1257 / FGSC 987).